Here is a 332-residue protein sequence, read N- to C-terminus: RNA polymerase principal sigma factor HrdD (332 aa).

The tract at residues 1 to 21 (MATRAVARRQPAASGETGAAG) is disordered. The short motif at 124-137 (DLIQEGNAGLVRAV) is the Polymerase core binding element. The segment at residues 294–313 (LTEVGKQHGLTRERIRQIEK) is a DNA-binding region (H-T-H motif).

The protein belongs to the sigma-70 factor family.

Its function is as follows. Sigma factors are initiation factors that promote the attachment of RNA polymerase to specific initiation sites and are then released. In Streptomyces griseus, this protein is RNA polymerase principal sigma factor HrdD (hrdD).